The following is a 120-amino-acid chain: MKILFVLISILYAVYCFSSEEDVDSAYLANELEPVEDINSEQYAALEPKEEQERSCADMGQDRKDDCDCCLNIATCNCWFGRYFCSCTFGDYQTCLRKKGKCKRNRPQSCPRSNLNRKKG.

The first 16 residues, 1 to 16 (MKILFVLISILYAVYC), serve as a signal peptide directing secretion. The propeptide occupies 17–54 (FSSEEDVDSAYLANELEPVEDINSEQYAALEPKEEQER). Cystine bridges form between cysteine 56–cysteine 70, cysteine 69–cysteine 87, and cysteine 78–cysteine 85. Residues 56-95 (CADMGQDRKDDCDCCLNIATCNCWFGRYFCSCTFGDYQTC) form the Agouti domain.

It belongs to the neurotoxin 05 (agouti) family. Post-translationally, contains 5 disulfide bonds. As to expression, expressed by the venom gland.

It localises to the secreted. In Lycosa singoriensis (Wolf spider), this protein is U13-lycotoxin-Ls1c.